Consider the following 1369-residue polypeptide: Neurofascin (1369 aa).

The N-terminal stretch at M1 to A25 is a signal peptide. Residues I26 to W1235 are Extracellular-facing. 2 Ig-like C2-type domains span residues P42–S138 and P144–T231. Intrachain disulfides connect C64-C119 and C163-C214. N-linked (GlcNAc...) asparagine glycans are attached at residues N241, N247, and N323. 4 Ig-like C2-type domains span residues P262–R350, P355–S442, P448–E535, and P539–T626. 2 disulfides stabilise this stretch: C286/C334 and C376/C426. N427, N464, and N501 each carry an N-linked (GlcNAc...) asparagine glycan. 2 cysteine pairs are disulfide-bonded: C470-C519 and C561-C610. Fibronectin type-III domains follow at residues R645 to A740, N745 to D838, A843 to G945, and S949 to S1057. A glycan (N-linked (GlcNAc...) asparagine) is linked at N692. A compositionally biased stretch (polar residues) spans M730–G739. A disordered region spans residues M730–G753. Residues N767, N793, N853, N994, and N1009 are each glycosylated (N-linked (GlcNAc...) asparagine). Residues T1078 to P1097 are disordered. N-linked (GlcNAc...) asparagine glycans are attached at residues N1133, N1150, N1156, and N1171. Residues N1133 to A1222 form the Fibronectin type-III 5 domain. A helical transmembrane segment spans residues F1236–I1256. Over K1257 to A1369 the chain is Cytoplasmic. Basic and acidic residues-rich tracts occupy residues V1266–E1282 and R1289–K1298. Positions V1266–A1369 are disordered. Polar residues predominate over residues L1300–Q1313.

The protein belongs to the immunoglobulin superfamily. L1/neurofascin/NgCAM family. In terms of processing, N-glycosylated and O-glycosylated. May be proteolytically cleaved at Arg-636.

The protein localises to the cell membrane. Its function is as follows. Cell adhesion, ankyrin-binding protein which may be involved in neurite extension, axonal guidance, synaptogenesis, myelination and neuron-glial cell interactions. This chain is Neurofascin (NFASC), found in Gallus gallus (Chicken).